Reading from the N-terminus, the 44-residue chain is Keratin-associated protein 20-3 (44 aa).

The protein belongs to the KRTAP type 20 family. As to quaternary structure, interacts with hair keratins.

In the hair cortex, hair keratin intermediate filaments are embedded in an interfilamentous matrix, consisting of hair keratin-associated proteins (KRTAP), which are essential for the formation of a rigid and resistant hair shaft through their extensive disulfide bond cross-linking with abundant cysteine residues of hair keratins. The matrix proteins include the high-sulfur and high-glycine-tyrosine keratins. The chain is Keratin-associated protein 20-3 (KRTAP20-3) from Homo sapiens (Human).